The following is a 348-amino-acid chain: Cyclin-dependent kinase inhibitor 1C (348 aa).

Arginine 109 is subject to Omega-N-methylarginine. The interval 115–348 (VAVIPRSGPP…VEQTPRKRLR (234 aa)) is disordered. 2 stretches are compositionally biased toward acidic residues: residues 207–220 (QGEE…DELG) and 227–274 (QGEE…QDEN). Residues 275 to 284 (QEQRGQELKD) show a composition bias toward basic and acidic residues. The Nuclear localization signal motif lies at 309 to 312 (KRKR).

It belongs to the CDI family. Interacts with PCNA. Expressed in the heart, brain, lung, skeletal muscle, kidney, pancreas and testis. High levels are seen in the placenta while low levels are seen in the liver.

Its subcellular location is the nucleus. Its function is as follows. Potent tight-binding inhibitor of several G1 cyclin/CDK complexes (cyclin E-CDK2, cyclin D2-CDK4, and cyclin A-CDK2) and, to lesser extent, of the mitotic cyclin B-CDC2. Negative regulator of cell proliferation. May play a role in maintenance of the non-proliferative state throughout life. This Mus musculus (Mouse) protein is Cyclin-dependent kinase inhibitor 1C (Cdkn1c).